The following is a 359-amino-acid chain: Serine/threonine-protein kinase SAPK7 (359 aa).

The Protein kinase domain maps to 4–260 (YELLKDIGAG…IREIRNHPWF (257 aa)). ATP-binding positions include 10-18 (IGAGNFGVA) and lysine 33. Aspartate 123 (proton acceptor) is an active-site residue. Residues 299–359 (EEARTPPRSS…VHASGEFQLS (61 aa)) form a disordered region. The span at 331–343 (EEQEEEEDAEDEY) shows a compositional bias: acidic residues.

This sequence belongs to the protein kinase superfamily. Ser/Thr protein kinase family. Post-translationally, may be phosphorylated. As to expression, weakly expressed in roots. Expressed in roots of young seedlings.

The protein localises to the cytoplasm. The protein resides in the nucleus. The enzyme catalyses L-seryl-[protein] + ATP = O-phospho-L-seryl-[protein] + ADP + H(+). It carries out the reaction L-threonyl-[protein] + ATP = O-phospho-L-threonyl-[protein] + ADP + H(+). With respect to regulation, activated by hyperosmotic stress. Its function is as follows. May play a role in signal transduction of hyperosmotic response. This is Serine/threonine-protein kinase SAPK7 (SAPK7) from Oryza sativa subsp. japonica (Rice).